We begin with the raw amino-acid sequence, 138 residues long: Trypsin inhibitor DE5 alpha chain (138 aa).

A disulfide bridge links C40 with C86.

Belongs to the protease inhibitor I3 (leguminous Kunitz-type inhibitor) family. In terms of assembly, heterodimer of an alpha and a beta chain linked by a disulfide bond.

In terms of biological role, inhibition of trypsin. This chain is Trypsin inhibitor DE5 alpha chain, found in Adenanthera pavonina (Sandal bead tree).